Consider the following 116-residue polypeptide: Large ribosomal subunit protein uL18 (116 aa).

The protein belongs to the universal ribosomal protein uL18 family. As to quaternary structure, part of the 50S ribosomal subunit; part of the 5S rRNA/L5/L18/L25 subcomplex. Contacts the 5S and 23S rRNAs.

Functionally, this is one of the proteins that bind and probably mediate the attachment of the 5S RNA into the large ribosomal subunit, where it forms part of the central protuberance. The sequence is that of Large ribosomal subunit protein uL18 from Exiguobacterium sibiricum (strain DSM 17290 / CCUG 55495 / CIP 109462 / JCM 13490 / 255-15).